A 133-amino-acid chain; its full sequence is Rodlin protein RdlB (133 aa).

The first 28 residues, 1 to 28 (MIKKVVAYAAIAASVMGASAAAAPQAMA), serve as a signal peptide directing secretion. Amyloid-forming stretches follow at residues 45–57 (QYFGNSMTTGNMS) and 59–70 (QMALIQGSFNKP). The interval 45-70 (QYFGNSMTTGNMSPQMALIQGSFNKP) is required for amyloid formation.

Belongs to the rodlin family.

Its subcellular location is the secreted. The protein resides in the cell wall. The protein localises to the spore wall. Functionally, forms part of the rodlet layer on the spore surface; despite their high similarity both RdlA and RdlB are required for rodlet formation. Plays a role in cell adhesion to polystyrene plates. Forms amyloid-like fibrils in vitro composed of stacked beta-sheets. This is Rodlin protein RdlB from Streptomyces coelicolor (strain ATCC BAA-471 / A3(2) / M145).